Consider the following 207-residue polypeptide: 3-demethoxyubiquinol 3-hydroxylase (207 aa).

Fe cation is bound by residues E56, E86, H89, E138, E170, and H173.

It belongs to the COQ7 family. Fe cation serves as cofactor.

It localises to the cell membrane. It carries out the reaction a 5-methoxy-2-methyl-3-(all-trans-polyprenyl)benzene-1,4-diol + AH2 + O2 = a 3-demethylubiquinol + A + H2O. It participates in cofactor biosynthesis; ubiquinone biosynthesis. In terms of biological role, catalyzes the hydroxylation of 2-nonaprenyl-3-methyl-6-methoxy-1,4-benzoquinol during ubiquinone biosynthesis. This chain is 3-demethoxyubiquinol 3-hydroxylase, found in Dechloromonas aromatica (strain RCB).